A 117-amino-acid chain; its full sequence is Large ribosomal subunit protein uL18 (117 aa).

This sequence belongs to the universal ribosomal protein uL18 family. As to quaternary structure, part of the 50S ribosomal subunit; part of the 5S rRNA/L5/L18/L25 subcomplex. Contacts the 5S and 23S rRNAs.

Functionally, this is one of the proteins that bind and probably mediate the attachment of the 5S RNA into the large ribosomal subunit, where it forms part of the central protuberance. The protein is Large ribosomal subunit protein uL18 of Azoarcus sp. (strain BH72).